Reading from the N-terminus, the 104-residue chain is Urease subunit beta (104 aa).

This sequence belongs to the urease beta subunit family. As to quaternary structure, heterotrimer of UreA (gamma), UreB (beta) and UreC (alpha) subunits. Three heterotrimers associate to form the active enzyme.

It localises to the cytoplasm. It catalyses the reaction urea + 2 H2O + H(+) = hydrogencarbonate + 2 NH4(+). It functions in the pathway nitrogen metabolism; urea degradation; CO(2) and NH(3) from urea (urease route): step 1/1. This chain is Urease subunit beta, found in Rhodococcus jostii (strain RHA1).